We begin with the raw amino-acid sequence, 198 residues long: Armadillo repeat-containing protein 7 (198 aa).

ARM repeat units follow at residues 57–99 and 100–140; these read QVLD…HAGG and VPLI…TATP. Phosphoserine is present on Ser-169.

As to quaternary structure, component of the minor spliceosome. Within this complex, interacts with RBM48.

Its function is as follows. As a component of the minor spliceosome, involved in the splicing of U12-type introns in pre-mRNAs. The polypeptide is Armadillo repeat-containing protein 7 (ARMC7) (Homo sapiens (Human)).